A 436-amino-acid polypeptide reads, in one-letter code: GTPase Der (436 aa).

EngA-type G domains lie at 4–167 (PVVA…PKVE) and 176–351 (IRFC…ESHN). GTP contacts are provided by residues 10–17 (GRPNVGKS), 57–61 (DTGGI), 119–122 (NKVD), 182–189 (GRPNVGKS), 229–233 (DTAGM), and 294–297 (NKWD). Residues 352 to 436 (IRVQTNVLND…PIRIIARARD (85 aa)) form the KH-like domain.

Belongs to the TRAFAC class TrmE-Era-EngA-EngB-Septin-like GTPase superfamily. EngA (Der) GTPase family. Associates with the 50S ribosomal subunit.

Functionally, GTPase that plays an essential role in the late steps of ribosome biogenesis. This chain is GTPase Der, found in Bacillus cytotoxicus (strain DSM 22905 / CIP 110041 / 391-98 / NVH 391-98).